The sequence spans 103 residues: Large ribosomal subunit protein bL21 (103 aa).

The protein belongs to the bacterial ribosomal protein bL21 family. As to quaternary structure, part of the 50S ribosomal subunit. Contacts protein L20.

This protein binds to 23S rRNA in the presence of protein L20. This is Large ribosomal subunit protein bL21 from Yersinia pseudotuberculosis serotype O:1b (strain IP 31758).